The primary structure comprises 257 residues: MQVIRLEALSDNYIFLLYDDKRNIAAVVDPAEAQPVLKKLAELKADLVAIFNTHHHNDHVGGNKQLIEKFPQLIVYGGAEDRGRIPGQKVFLQQGDRVEFADRIAEVIFVPGHTRAHIAYYFPPQEASETGDLFCGDTLFSGGCGRLFEGTPTQMVDSLSKLRSLPDNTRIWCAHEYTLKNLQFALTVDGDNADLQRRFNEVKAYRSRGEATIPSLLGVEKHTNPFLRWDQASLQSTVKSSDGVQTFARIREMKNNF.

Residues His54, His56, Asp58, His59, His113, Asp137, and His175 each coordinate Zn(2+).

It belongs to the metallo-beta-lactamase superfamily. Glyoxalase II family. In terms of assembly, monomer. Zn(2+) is required as a cofactor.

The catalysed reaction is an S-(2-hydroxyacyl)glutathione + H2O = a 2-hydroxy carboxylate + glutathione + H(+). It participates in secondary metabolite metabolism; methylglyoxal degradation; (R)-lactate from methylglyoxal: step 2/2. Its function is as follows. Thiolesterase that catalyzes the hydrolysis of S-D-lactoyl-glutathione to form glutathione and D-lactic acid. The sequence is that of Hydroxyacylglutathione hydrolase from Nostoc punctiforme (strain ATCC 29133 / PCC 73102).